Consider the following 171-residue polypeptide: Crossover junction endodeoxyribonuclease RuvC (171 aa).

Residues aspartate 7, glutamate 66, and aspartate 138 contribute to the active site. Aspartate 7, glutamate 66, and aspartate 138 together coordinate Mg(2+).

It belongs to the RuvC family. As to quaternary structure, homodimer which binds Holliday junction (HJ) DNA. The HJ becomes 2-fold symmetrical on binding to RuvC with unstacked arms; it has a different conformation from HJ DNA in complex with RuvA. In the full resolvosome a probable DNA-RuvA(4)-RuvB(12)-RuvC(2) complex forms which resolves the HJ. Requires Mg(2+) as cofactor.

The protein localises to the cytoplasm. The catalysed reaction is Endonucleolytic cleavage at a junction such as a reciprocal single-stranded crossover between two homologous DNA duplexes (Holliday junction).. Its function is as follows. The RuvA-RuvB-RuvC complex processes Holliday junction (HJ) DNA during genetic recombination and DNA repair. Endonuclease that resolves HJ intermediates. Cleaves cruciform DNA by making single-stranded nicks across the HJ at symmetrical positions within the homologous arms, yielding a 5'-phosphate and a 3'-hydroxyl group; requires a central core of homology in the junction. The consensus cleavage sequence is 5'-(A/T)TT(C/G)-3'. Cleavage occurs on the 3'-side of the TT dinucleotide at the point of strand exchange. HJ branch migration catalyzed by RuvA-RuvB allows RuvC to scan DNA until it finds its consensus sequence, where it cleaves and resolves the cruciform DNA. The sequence is that of Crossover junction endodeoxyribonuclease RuvC from Francisella tularensis subsp. holarctica (strain FTNF002-00 / FTA).